Reading from the N-terminus, the 160-residue chain is NADH-quinone oxidoreductase subunit B (160 aa).

Residues C37, C38, C102, and C132 each contribute to the [4Fe-4S] cluster site.

It belongs to the complex I 20 kDa subunit family. As to quaternary structure, NDH-1 is composed of 14 different subunits. Subunits NuoB, C, D, E, F, and G constitute the peripheral sector of the complex. [4Fe-4S] cluster is required as a cofactor.

It is found in the cell inner membrane. The catalysed reaction is a quinone + NADH + 5 H(+)(in) = a quinol + NAD(+) + 4 H(+)(out). Functionally, NDH-1 shuttles electrons from NADH, via FMN and iron-sulfur (Fe-S) centers, to quinones in the respiratory chain. Couples the redox reaction to proton translocation (for every two electrons transferred, four hydrogen ions are translocated across the cytoplasmic membrane), and thus conserves the redox energy in a proton gradient. This chain is NADH-quinone oxidoreductase subunit B, found in Neisseria meningitidis serogroup A / serotype 4A (strain DSM 15465 / Z2491).